The primary structure comprises 169 residues: Phosphopantetheine adenylyltransferase (169 aa).

Thr-14 lines the substrate pocket. Residues 14-15 (TF) and His-22 contribute to the ATP site. 3 residues coordinate substrate: Lys-46, Leu-78, and Arg-92. Residues 93–95 (GLR), Glu-103, and 128–134 (HSFISSS) contribute to the ATP site.

Belongs to the bacterial CoaD family. In terms of assembly, homohexamer. Mg(2+) serves as cofactor.

Its subcellular location is the cytoplasm. The enzyme catalyses (R)-4'-phosphopantetheine + ATP + H(+) = 3'-dephospho-CoA + diphosphate. It functions in the pathway cofactor biosynthesis; coenzyme A biosynthesis; CoA from (R)-pantothenate: step 4/5. Its function is as follows. Reversibly transfers an adenylyl group from ATP to 4'-phosphopantetheine, yielding dephospho-CoA (dPCoA) and pyrophosphate. This is Phosphopantetheine adenylyltransferase from Stenotrophomonas maltophilia (strain K279a).